Consider the following 279-residue polypeptide: MKLAQLFSNFEEELIRQGEEAESLSFVYRSLKNLSFTDFIFALQQEVTTEEEKQFVEDIYQQLAAHKPAQYIIGQADFYGMHLKVDERVLIPRPETEELVELILTENLETNLSVLDIGTGSGAIALALAKNRPDWSVTAADISQEALDLARENAKNQNLQIFLKKSDCFTEISEKYDIIVSNPPYISREDESEVGLNVLYSEPHLALFADEDGLAIYRRIAEDATDYLKDSGKIYLEIGYKQGQCVPELFRKHLPEKRVRTLKDQFGQNRMVVVDDGQD.

S-adenosyl-L-methionine contacts are provided by residues 118–122, aspartate 141, and asparagine 182; that span reads GTGSG. Substrate is bound at residue 182–185; it reads NPPY.

This sequence belongs to the protein N5-glutamine methyltransferase family. PrmC subfamily.

It catalyses the reaction L-glutaminyl-[peptide chain release factor] + S-adenosyl-L-methionine = N(5)-methyl-L-glutaminyl-[peptide chain release factor] + S-adenosyl-L-homocysteine + H(+). Its function is as follows. Methylates the class 1 translation termination release factors RF1/PrfA and RF2/PrfB on the glutamine residue of the universally conserved GGQ motif. In Streptococcus pneumoniae (strain ATCC BAA-255 / R6), this protein is Release factor glutamine methyltransferase.